We begin with the raw amino-acid sequence, 212 residues long: Ribonuclease HII (212 aa).

The region spanning 2–206 (TPLVGVDEAG…CERIRAEAEQ (205 aa)) is the RNase H type-2 domain. Residues aspartate 8, glutamate 9, and aspartate 101 each coordinate a divalent metal cation.

It belongs to the RNase HII family. The cofactor is Mn(2+). Mg(2+) is required as a cofactor.

It localises to the cytoplasm. It catalyses the reaction Endonucleolytic cleavage to 5'-phosphomonoester.. Endonuclease that specifically degrades the RNA of RNA-DNA hybrids. This chain is Ribonuclease HII, found in Natronomonas pharaonis (strain ATCC 35678 / DSM 2160 / CIP 103997 / JCM 8858 / NBRC 14720 / NCIMB 2260 / Gabara) (Halobacterium pharaonis).